Here is a 509-residue protein sequence, read N- to C-terminus: Probable cation transporter HKT2;3 (509 aa).

Topologically, residues 1-32 (MPIRLHIFVNSARHAINSSAFICRFIAYHLSP) are cytoplasmic. Transmembrane regions (helical) follow at residues 33–53 (LLIH…SLVV) and 96–116 (ILTL…GLVL). At 117–164 (ESSKQNKHDPENRRVSSVTVCKQSQLEEATPQTPSMNSIDIKKRCLKY) the chain is on the cytoplasmic side. 2 helical membrane passes run 165-185 (LVFV…LLVF) and 237-257 (GLLL…PVFL). Residues 258–296 (RLVIWALRGLRLAKAEEPDFMMNNSSAVGFSHLLPNLQT) are Cytoplasmic-facing. A run of 2 helical transmembrane segments spans residues 297 to 317 (IFLA…FCCL) and 353 to 373 (CSLV…TPSL). Residues 374–400 (TKLFSACQDHKRIGPESDDRTSKGKPF) lie on the Cytoplasmic side of the membrane. The next 2 helical transmembrane spans lie at 401–421 (LKMM…LVCI) and 474–494 (AYNF…LAML). The Cytoplasmic segment spans residues 495 to 509 (CGRLNSKDSTSARTR).

The protein belongs to the TrkH potassium transport family. HKT (TC 2.A.38.3) subfamily.

The protein resides in the membrane. Its function is as follows. Probable cation transporter. May be involved in regulation of potassium-sodium homeostasis. The polypeptide is Probable cation transporter HKT2;3 (Oryza sativa subsp. japonica (Rice)).